The chain runs to 690 residues: Signal peptide peptidase-like 2C (690 aa).

Residues Met-1–Gly-28 form the signal peptide. Over Glu-29–Asn-192 the chain is Lumenal. The 80-residue stretch at Asp-87 to Asp-166 folds into the PA domain. N-linked (GlcNAc...) asparagine glycosylation occurs at Asn-106. Residues Met-193–Leu-213 traverse the membrane as a helical segment. At Met-214–Phe-260 the chain is on the cytoplasmic side. Residues Thr-261–Tyr-283 form a helical membrane-spanning segment. Asp-284 is a topological domain (lumenal). A helical transmembrane segment spans residues Cys-285–Ala-307. Residues Pro-308 to Ser-328 are Cytoplasmic-facing. A helical transmembrane segment spans residues Val-329–Ile-349. Over His-350–Asp-354 the chain is Lumenal. Residues His-355–Leu-373 form a helical membrane-spanning segment. Over Arg-374–Cys-384 the chain is Cytoplasmic. Residues Thr-385–Phe-405 traverse the membrane as a helical segment. The active site involves Asp-395. Over Thr-406–Gln-448 the chain is Lumenal. A helical membrane pass occupies residues Pro-449 to His-469. Asp-457 is an active-site residue. At Arg-470–Tyr-482 the chain is on the cytoplasmic side. A helical transmembrane segment spans residues Met-483–Met-503. Position 504 (Gln-504) is a topological domain, lumenal. Residues Met-505–Ala-525 form a helical membrane-spanning segment. The PAL signature appears at Pro-508 to Leu-510. The Cytoplasmic portion of the chain corresponds to Thr-526–Leu-690. Over residues Glu-564–Asn-573 the composition is skewed to basic and acidic residues. The segment at Glu-564–Pro-633 is disordered. Polar residues predominate over residues Ser-615 to Asp-624.

The protein belongs to the peptidase A22B family. As to quaternary structure, interacts (via active sites) with FREY; the interaction stabilizes FREY1 protein and inhibits SPPL2C proteolytic activity. In terms of processing, glycosylated. Highly expressed in testis where it is primarily localised in spermatids (at protein level).

The protein localises to the endoplasmic reticulum membrane. Sperm-specific intramembrane-cleaving aspartic protease (I-CLiP) that cleaves distinct tail-anchored proteins and SNARE proteins. In elongated spermatids, modulates intracellular Ca(2+) homeostasis by controlling PLN abundance through proteolytic cleavage. During spermatogenesis, processes SNARE proteins and impacts vesicular trafficking which supports compartmental reorganization in maturating spermatids and may play a role in formation of the acrosome. Its function is as follows. In round spermatids, acts as a scaffold protein supporting FREY1 in IZUMO1 recruitment at the endoplasmic reticulum membrane and coordination of IZUMO1 complex assembly. Stabilizes FREY1 at the endoplasmic reticulum membrane through interaction. May recruit IZUMO1 interaction partners. Functionally, no difference in cleavage specificity compared to isoform 1. The protein is Signal peptide peptidase-like 2C of Mus musculus (Mouse).